We begin with the raw amino-acid sequence, 368 residues long: tRNA-specific 2-thiouridylase MnmA (368 aa).

Residues 12-19 and methionine 38 contribute to the ATP site; that span reads AMSGGVDS. An interaction with target base in tRNA region spans residues 98–100; that stretch reads NPD. The active-site Nucleophile is the cysteine 103. Cysteine 103 and cysteine 200 are disulfide-bonded. Glycine 128 is a binding site for ATP. The segment at 150-152 is interaction with tRNA; the sequence is KDQ. Cysteine 200 acts as the Cysteine persulfide intermediate in catalysis. The tract at residues 312–313 is interaction with tRNA; the sequence is RY.

This sequence belongs to the MnmA/TRMU family. As to quaternary structure, interacts with TusE.

The protein localises to the cytoplasm. It carries out the reaction S-sulfanyl-L-cysteinyl-[protein] + uridine(34) in tRNA + AH2 + ATP = 2-thiouridine(34) in tRNA + L-cysteinyl-[protein] + A + AMP + diphosphate + H(+). In terms of biological role, catalyzes the 2-thiolation of uridine at the wobble position (U34) of tRNA(Lys), tRNA(Glu) and tRNA(Gln), leading to the formation of s(2)U34, the first step of tRNA-mnm(5)s(2)U34 synthesis. Sulfur is provided by IscS, via a sulfur-relay system. Binds ATP and its substrate tRNAs. The chain is tRNA-specific 2-thiouridylase MnmA from Buchnera aphidicola subsp. Acyrthosiphon pisum (strain APS) (Acyrthosiphon pisum symbiotic bacterium).